We begin with the raw amino-acid sequence, 479 residues long: Glutamyl-tRNA(Gln) amidotransferase subunit A (479 aa).

Active-site charge relay system residues include K74 and S149. The Acyl-ester intermediate role is filled by S173.

Belongs to the amidase family. GatA subfamily. In terms of assembly, heterotrimer of A, B and C subunits.

The catalysed reaction is L-glutamyl-tRNA(Gln) + L-glutamine + ATP + H2O = L-glutaminyl-tRNA(Gln) + L-glutamate + ADP + phosphate + H(+). In terms of biological role, allows the formation of correctly charged Gln-tRNA(Gln) through the transamidation of misacylated Glu-tRNA(Gln) in organisms which lack glutaminyl-tRNA synthetase. The reaction takes place in the presence of glutamine and ATP through an activated gamma-phospho-Glu-tRNA(Gln). The polypeptide is Glutamyl-tRNA(Gln) amidotransferase subunit A (Cenarchaeum symbiosum (strain A)).